We begin with the raw amino-acid sequence, 409 residues long: LL-diaminopimelate aminotransferase (409 aa).

Substrate is bound by residues Y15 and G42. Residues Y72, 108–109, Y132, N186, Y217, and 245–247 each bind pyridoxal 5'-phosphate; these read AK and SFS. Substrate contacts are provided by K109, Y132, and N186. K248 bears the N6-(pyridoxal phosphate)lysine mark. Residues R256 and N291 each coordinate pyridoxal 5'-phosphate. Substrate is bound by residues N291 and R386.

This sequence belongs to the class-I pyridoxal-phosphate-dependent aminotransferase family. LL-diaminopimelate aminotransferase subfamily. Homodimer. The cofactor is pyridoxal 5'-phosphate.

The enzyme catalyses (2S,6S)-2,6-diaminopimelate + 2-oxoglutarate = (S)-2,3,4,5-tetrahydrodipicolinate + L-glutamate + H2O + H(+). The protein operates within amino-acid biosynthesis; L-lysine biosynthesis via DAP pathway; LL-2,6-diaminopimelate from (S)-tetrahydrodipicolinate (aminotransferase route): step 1/1. In terms of biological role, involved in the synthesis of meso-diaminopimelate (m-DAP or DL-DAP), required for both lysine and peptidoglycan biosynthesis. Catalyzes the direct conversion of tetrahydrodipicolinate to LL-diaminopimelate. This Desulforapulum autotrophicum (strain ATCC 43914 / DSM 3382 / VKM B-1955 / HRM2) (Desulfobacterium autotrophicum) protein is LL-diaminopimelate aminotransferase.